A 298-amino-acid polypeptide reads, in one-letter code: Putative enoyl-CoA reductase (298 aa).

4 consecutive transmembrane segments (helical) span residues 162–182, 189–209, 229–249, and 254–274; these read CVYY…PYYT, LVNA…AVHV, ILFS…WVAF, and SMLT…EWAV.

Belongs to the steroid 5-alpha reductase family.

It is found in the membrane. It participates in lipid metabolism; fatty acid biosynthesis. In terms of biological role, involved in the synthesis of fatty acids. This Trypanosoma brucei brucei (strain 927/4 GUTat10.1) protein is Putative enoyl-CoA reductase.